The chain runs to 602 residues: Chaperone protein DnaK (602 aa).

The residue at position 199 (Thr199) is a Phosphothreonine; by autocatalysis.

The protein belongs to the heat shock protein 70 family.

Functionally, acts as a chaperone. This Carsonella ruddii (strain PV) protein is Chaperone protein DnaK.